Reading from the N-terminus, the 342-residue chain is Maltose regulon regulatory protein MalI (342 aa).

The HTH lacI-type domain occupies 7–61; that stretch reads ITIHDVALAAGVSVSTVSLVLSGKGRISTATGERVNAAIEELGFVRNRQASALRG. Residues 9 to 28 constitute a DNA-binding region (H-T-H motif); the sequence is IHDVALAAGVSVSTVSLVLS.

Its function is as follows. Repressor for the malX and malY genes. Also regulates its own expression. Binds maltose as an inducer. The polypeptide is Maltose regulon regulatory protein MalI (malI) (Escherichia coli (strain K12)).